Reading from the N-terminus, the 334-residue chain is Testis-specific Y-encoded protein 1 (334 aa).

S4 carries the post-translational modification Phosphoserine. Disordered stretches follow at residues 27 to 46 (LEGE…PAGD) and 96 to 146 (NEGE…AERR). Composition is skewed to basic and acidic residues over residues 96–108 (NEGE…KQEG) and 115–128 (ELEK…DSKD).

It belongs to the nucleosome assembly protein (NAP) family. Phosphorylated. Testis.

It is found in the cytoplasm. Its subcellular location is the nucleus. In terms of biological role, may be involved in sperm differentiation and proliferation. This chain is Testis-specific Y-encoded protein 1 (Tspy1), found in Rattus norvegicus (Rat).